The sequence spans 2561 residues: Plipastatin synthase subunit A (2561 aa).

The interval 1 to 1038 (MSEHTYSLTH…ATVIREGTDS (1038 aa)) is domain 1 (glutamate-activating). A condensation 1 region spans residues 2–300 (SEHTYSLTHA…SSLPIRITVD (299 aa)). The segment at 485–888 (TYAELDMYAS…SIEGVREAAV (404 aa)) is adenylation 1. The region spanning 961 to 1036 (APRNVTEMKL…GLATVIREGT (76 aa)) is the Carrier 1 domain. O-(pantetheine 4'-phosphoryl)serine is present on Ser996. The segment at 1048-1338 (KQETYPVSSA…NTLALRTRPE (291 aa)) is condensation 2. The tract at residues 1048 to 2554 (KQETYPVSSA…ELTLSALSSI (1507 aa)) is domain 2 (D-ornithine-activating). The adenylation 2 stretch occupies residues 1525 to 1932 (SYRLLNERAN…QTGLVREAAV (408 aa)). Positions 2007–2081 (APVNDLQKTM…ELCGHITPLA (75 aa)) constitute a Carrier 2 domain. Position 2042 is an O-(pantetheine 4'-phosphoryl)serine (Ser2042). Residues 2089–2554 (AEGEAELTPI…ELTLSALSSI (466 aa)) form an epimerization region.

Belongs to the ATP-dependent AMP-binding enzyme family. Pantetheine 4'-phosphate serves as cofactor.

This protein is a multifunctional enzyme, able to activate and polymerize the amino acids Glu and Orn as part of the biosynthesis of the lipopeptide antibiotic lipastatin. The Orn residue is further epimerized to the D-isomer form. The activation sites for these amino acids consist of individual domains. This is Plipastatin synthase subunit A (ppsA) from Bacillus subtilis (strain 168).